We begin with the raw amino-acid sequence, 123 residues long: Large ribosomal subunit protein uL14 (123 aa).

This sequence belongs to the universal ribosomal protein uL14 family. Part of the 50S ribosomal subunit. Forms a cluster with proteins L3 and L19. In the 70S ribosome, L14 and L19 interact and together make contacts with the 16S rRNA in bridges B5 and B8.

Functionally, binds to 23S rRNA. Forms part of two intersubunit bridges in the 70S ribosome. The polypeptide is Large ribosomal subunit protein uL14 (Vibrio cholerae serotype O1 (strain ATCC 39541 / Classical Ogawa 395 / O395)).